A 482-amino-acid chain; its full sequence is Probable cytosol aminopeptidase (482 aa).

2 residues coordinate Mn(2+): Lys-251 and Asp-256. Residue Lys-263 is part of the active site. Mn(2+) contacts are provided by Asp-274, Asp-333, and Glu-335. Arg-337 is a catalytic residue.

Belongs to the peptidase M17 family. It depends on Mn(2+) as a cofactor.

It is found in the cytoplasm. The enzyme catalyses Release of an N-terminal amino acid, Xaa-|-Yaa-, in which Xaa is preferably Leu, but may be other amino acids including Pro although not Arg or Lys, and Yaa may be Pro. Amino acid amides and methyl esters are also readily hydrolyzed, but rates on arylamides are exceedingly low.. It carries out the reaction Release of an N-terminal amino acid, preferentially leucine, but not glutamic or aspartic acids.. In terms of biological role, presumably involved in the processing and regular turnover of intracellular proteins. Catalyzes the removal of unsubstituted N-terminal amino acids from various peptides. This chain is Probable cytosol aminopeptidase, found in Acinetobacter baumannii (strain SDF).